The chain runs to 680 residues: DNA ligase (680 aa).

Residues 35–39, 86–87, and Glu111 each bind NAD(+); these read DADFD and SL. The active-site N6-AMP-lysine intermediate is Lys113. Positions 134, 174, 290, and 314 each coordinate NAD(+). Residues Cys408, Cys411, Cys427, and Cys433 each contribute to the Zn(2+) site. One can recognise a BRCT domain in the interval 597-680; the sequence is VAEQTLEGLT…RLLNTGSADE (84 aa).

The protein belongs to the NAD-dependent DNA ligase family. LigA subfamily. Mg(2+) is required as a cofactor. Requires Mn(2+) as cofactor.

It carries out the reaction NAD(+) + (deoxyribonucleotide)n-3'-hydroxyl + 5'-phospho-(deoxyribonucleotide)m = (deoxyribonucleotide)n+m + AMP + beta-nicotinamide D-nucleotide.. Its function is as follows. DNA ligase that catalyzes the formation of phosphodiester linkages between 5'-phosphoryl and 3'-hydroxyl groups in double-stranded DNA using NAD as a coenzyme and as the energy source for the reaction. It is essential for DNA replication and repair of damaged DNA. The sequence is that of DNA ligase from Corynebacterium glutamicum (strain ATCC 13032 / DSM 20300 / JCM 1318 / BCRC 11384 / CCUG 27702 / LMG 3730 / NBRC 12168 / NCIMB 10025 / NRRL B-2784 / 534).